Consider the following 395-residue polypeptide: Argininosuccinate synthase (395 aa).

7–15 (LYSGGLDTS) provides a ligand contact to ATP. An L-citrulline-binding site is contributed by Tyr-83. Residue Gly-113 participates in ATP binding. L-aspartate-binding residues include Thr-115, Asn-119, and Asp-120. Residue Asn-119 participates in L-citrulline binding. Residues Arg-123, Ser-169, Ser-178, Glu-253, and Tyr-265 each coordinate L-citrulline.

The protein belongs to the argininosuccinate synthase family. Type 1 subfamily. In terms of assembly, homotetramer.

The protein localises to the cytoplasm. The enzyme catalyses L-citrulline + L-aspartate + ATP = 2-(N(omega)-L-arginino)succinate + AMP + diphosphate + H(+). It participates in amino-acid biosynthesis; L-arginine biosynthesis; L-arginine from L-ornithine and carbamoyl phosphate: step 2/3. This is Argininosuccinate synthase from Picrophilus torridus (strain ATCC 700027 / DSM 9790 / JCM 10055 / NBRC 100828 / KAW 2/3).